A 591-amino-acid polypeptide reads, in one-letter code: MAASDKSVDDSLYPIAVLIDELKNEDVQLRLNSIKKLSTIALALGEERTRSELIPFLTETIYDEDEVLLALADQLGNFTSLVGGPEFAMYLIPPLESLATVEETVVRDKAVESLRTVAAEHSAQDLEIHVVPTLQRLVSGDWFTSRTSACGLFSVCYPRVTQPVKAELRANFRKLCQDETPMVRRAAANKLGEFAKVVETEYLKSDLIPNFVQLAQDDQDSVRLLAVEACVSIAQLLPQDDVEHLVLPTLRQCASDSSWRVRYMVAEKFVDLQKAVGPEITRVDLVPAFQYLLKDAEAEVRAAVATKVKDFCANLDKVNQVQIILSSILPYVRDLVSDPNPHVKSALASVIMGLSPMLGAYQTVEQLLPLFLIQLKDECPEVRLNIISNLDCVNDVIGIQQLSQSLLPAIVELAEDSKWRVRLAIIEYMPALAGQLGQEFFDQKLRGLCMGWLNDHVYAIREAATLNMKKLVEQFGAPWAEQAIIPMILVMSRNKNYLHRMTCLFCLNVLAEVCGTDITTKLLLPTVLLLAADPVANVRFNVAKTLQKISPFLEASVIDAQVKPTLDKLNTDTDVDVKHFAAQAIAGIAAA.

Position 2 is an N-acetylalanine (Ala2). 15 HEAT repeats span residues Asp10–Arg48, Thr49–Glu86, Phe87–Asp125, Leu126–Pro163, Val164–Tyr202, Leu203–Asp241, Val242–Ile280, Thr281–Ile323, Ile324–Gln362, Thr363–Gln401, Leu402–Phe440, Phe441–Trp479, Ala480–Ile518, Thr519–Val557, and Ile558–Ala591.

It belongs to the phosphatase 2A regulatory subunit A family. In terms of assembly, PP2A exists in several trimeric forms, all of which consist of a core composed of a catalytic subunit associated with a 65 kDa regulatory subunit (PR65) (subunit A). The core complex associates with a third, variable subunit (subunit B), which confers distinct properties to the holoenzyme. Interacts with the inorganic phosphate transporter PXo (CG10483). Component of the Integrator-PP2A (INTAC) complex, composed of the Integrator core complex and protein phosphatase 2A subunits mts/PP2A and Pp2A-29B. In terms of tissue distribution, expression varies in tissues throughout development. Highly distributed expression in early embryos. In late embryonal development, found at high levels in nervous system and gonads. In third instar larvae, found in brain, imaginal disks and salivary glands.

The protein resides in the nucleus. Its function is as follows. The PR65 subunit of protein phosphatase 2A serves as a scaffolding molecule to coordinate the assembly of the catalytic subunit and a variable regulatory B subunit. Key mediator of a quality checkpoint during transcription elongation as part of the Integrator-PP2A (INTAC) complex. The INTAC complex drives premature transcription termination of transcripts that are unfavorably configured for transcriptional elongation: within the INTAC complex, acts as a scaffolding subunit for mts/PP2A, which catalyzes dephosphorylation of the C-terminal domain (CTD) of Pol II subunit POLR2A/RPB1 and Spt5, thereby preventing transcriptional elongation. This Drosophila melanogaster (Fruit fly) protein is Serine/threonine-protein phosphatase PP2A 65 kDa regulatory subunit (Pp2A-29B).